A 313-amino-acid polypeptide reads, in one-letter code: B3 domain-containing protein At2g31720 (313 aa).

The interval 80 to 110 is disordered; that stretch reads KNQDPEQNPNRVASSPSSCHLESKRPQKVVS. The segment covering 84 to 99 has biased composition (polar residues); that stretch reads PEQNPNRVASSPSSCH. A DNA-binding region (TF-B3) is located at residues 169 to 267; the sequence is WKQILDMDFL…MLFFAFVLSD (99 aa).

It is found in the nucleus. This Arabidopsis thaliana (Mouse-ear cress) protein is B3 domain-containing protein At2g31720 (ARF70).